Here is a 396-residue protein sequence, read N- to C-terminus: Flavohemoprotein (396 aa).

Positions 1-136 constitute a Globin domain; sequence MLDAQTIATV…LANVFIHREA (136 aa). Heme b is bound at residue His85. Active-site charge relay system residues include Tyr95 and Glu135. The interval 147 to 396 is reductase; sequence GGWEGTRPFR…YECFGPHKVL (250 aa). Positions 150–255 constitute an FAD-binding FR-type domain; it reads EGTRPFRIVA…AAPAGDFFMN (106 aa). FAD-binding positions include Tyr188 and 204 to 207; that span reads RQYS. 268–273 lines the NADP(+) pocket; the sequence is GVGQTP. 389–392 lines the FAD pocket; sequence CFGP.

Belongs to the globin family. Two-domain flavohemoproteins subfamily. It in the C-terminal section; belongs to the flavoprotein pyridine nucleotide cytochrome reductase family. Monomer. It depends on heme b as a cofactor. FAD is required as a cofactor.

It catalyses the reaction 2 nitric oxide + NADPH + 2 O2 = 2 nitrate + NADP(+) + H(+). The enzyme catalyses 2 nitric oxide + NADH + 2 O2 = 2 nitrate + NAD(+) + H(+). Its function is as follows. Is involved in NO detoxification in an aerobic process, termed nitric oxide dioxygenase (NOD) reaction that utilizes O(2) and NAD(P)H to convert NO to nitrate, which protects the bacterium from various noxious nitrogen compounds. Therefore, plays a central role in the inducible response to nitrosative stress. The sequence is that of Flavohemoprotein (hmp) from Salmonella typhimurium (strain LT2 / SGSC1412 / ATCC 700720).